A 145-amino-acid polypeptide reads, in one-letter code: Ribonuclease HI (145 aa).

The RNase H type-1 domain maps to M1–A142. Mg(2+) is bound by residues D10, E48, D70, and D134.

Belongs to the RNase H family. As to quaternary structure, monomer. The cofactor is Mg(2+).

Its subcellular location is the cytoplasm. The catalysed reaction is Endonucleolytic cleavage to 5'-phosphomonoester.. Its function is as follows. Endonuclease that specifically degrades the RNA of RNA-DNA hybrids. This is Ribonuclease HI from Neisseria meningitidis serogroup B (strain ATCC BAA-335 / MC58).